Reading from the N-terminus, the 438-residue chain is tRNA modification GTPase MnmE (438 aa).

Residues Arg-20, Glu-79, and Lys-119 each contribute to the (6S)-5-formyl-5,6,7,8-tetrahydrofolate site. In terms of domain architecture, TrmE-type G spans 215–360 (GVEVAIVGPP…LEAALAARVG (146 aa)). GTP is bound by residues 225–230 (NAGKSS), 244–250 (SDEAGTT), and 269–272 (DTAG). 2 residues coordinate Mg(2+): Ser-229 and Thr-250. Residue Lys-438 participates in (6S)-5-formyl-5,6,7,8-tetrahydrofolate binding.

Belongs to the TRAFAC class TrmE-Era-EngA-EngB-Septin-like GTPase superfamily. TrmE GTPase family. As to quaternary structure, homodimer. Heterotetramer of two MnmE and two MnmG subunits. The cofactor is K(+).

Its subcellular location is the cytoplasm. Its function is as follows. Exhibits a very high intrinsic GTPase hydrolysis rate. Involved in the addition of a carboxymethylaminomethyl (cmnm) group at the wobble position (U34) of certain tRNAs, forming tRNA-cmnm(5)s(2)U34. The sequence is that of tRNA modification GTPase MnmE from Parvibaculum lavamentivorans (strain DS-1 / DSM 13023 / NCIMB 13966).